The chain runs to 332 residues: MIDLIKRLPKAELHLHIEGSLEPELMFRLAKKNQIEIPYKDIEDVRNAYNFTNLQTFLDIYYAGANVLITQDDFYDLTWEYILKCVEDNVIHTEIFFDPQTHTARGVTFETVITGIKRALADAKAQYGITSCIIMCFLRHLSQEEAFETLEQALPFKDDIIGVGLDSSELGNPPSKFIEVFKKAKEEGFKLVAHAGEEADFSYIYEALDLLDISRIDHGVQSIKSAELMQRLKDEQMPLTVCPNSNIELRVFNNYKEHNIKELLDYGLNITVNSDDPAYFKGYINQNFINISENLPLTEDDIITLVKNSFRSSFISDELKQQYLNRVDQAVG.

Zn(2+)-binding residues include H14, H16, and H194. E197 functions as the Proton donor in the catalytic mechanism. D275 contributes to the Zn(2+) binding site. D276 contributes to the substrate binding site.

The protein belongs to the metallo-dependent hydrolases superfamily. Adenosine and AMP deaminases family. Adenine deaminase type 2 subfamily. Zn(2+) is required as a cofactor.

It catalyses the reaction adenine + H2O + H(+) = hypoxanthine + NH4(+). Its function is as follows. Catalyzes the hydrolytic deamination of adenine to hypoxanthine. Plays an important role in the purine salvage pathway and in nitrogen catabolism. The protein is Adenine deaminase of Psychrobacter cryohalolentis (strain ATCC BAA-1226 / DSM 17306 / VKM B-2378 / K5).